The primary structure comprises 185 residues: Putative tyrosine-protein phosphatase OCA1 (185 aa).

The Tyrosine-protein phosphatase domain occupies 18-178 (NFCPVEKQLY…TVEIGSGKGS (161 aa)). The active-site Phosphocysteine intermediate is the Cys-116.

Belongs to the protein-tyrosine phosphatase family.

It localises to the cytoplasm. It catalyses the reaction O-phospho-L-tyrosyl-[protein] + H2O = L-tyrosyl-[protein] + phosphate. Functionally, putative tyrosine-protein phosphatase required for protection against superoxide stress. This Meyerozyma guilliermondii (strain ATCC 6260 / CBS 566 / DSM 6381 / JCM 1539 / NBRC 10279 / NRRL Y-324) (Yeast) protein is Putative tyrosine-protein phosphatase OCA1 (OCA1).